An 818-amino-acid polypeptide reads, in one-letter code: Nibrin (818 aa).

The region spanning 22–70 (YVVGRKNCEILLTNDQSISRVHAVLTVTEQAVTLKDSSKYGTFVNGEKL) is the FHA domain. BRCT domains lie at 91–168 (SKFS…SALS) and 211–301 (GKTF…LAAI). 3 disordered regions span residues 372-716 (AVGE…DLPR), 729-757 (NNSS…KKNV), and 793-818 (EEKL…AKKR). Over residues 379-405 (KTNPTQKASTTNKPLSLGQEPSSTRIV) the composition is skewed to polar residues. Positions 409–419 (VMSSESFSVVE) are enriched in low complexity. Residues 444–469 (APSSGNTTLKHSPQKQTALTSFFQPS) show a composition bias toward polar residues. Positions 470–475 (SKKRPR) match the Nuclear localization signal motif. Polar residues predominate over residues 515–530 (EETSLGQACGTGQNSS). A compositionally biased stretch (acidic residues) spans 549–571 (TAADDLEMSLEELEFLMSDEMDE). Residues 586 to 602 (GLTSKINSEQLSNQQEV) are compositionally biased toward polar residues. A compositionally biased stretch (basic and acidic residues) spans 603 to 612 (TESKGRKGEK). A compositionally biased stretch (low complexity) spans 613-625 (NQQSSSSNIQSMQ). 2 stretches are compositionally biased toward polar residues: residues 633–644 (VTNQDTQTQSKR) and 653–662 (SSANKGPSKN). Over residues 663-675 (KTPELEEVKKEEV) the composition is skewed to basic and acidic residues. Composition is skewed to polar residues over residues 678-692 (VVNS…QTSE) and 699-708 (MQASTSNSGP). A compositionally biased stretch (basic and acidic residues) spans 793–808 (EEKLNEREETLGDDLF). The short motif at 804-813 (GDDLFRYNPR) is the FxF/Y motif element.

Belongs to the Nibrin family. As to quaternary structure, component of the MRN complex composed of two heterodimers rad50 and mre11 associated with a single nbn.

The protein localises to the nucleus. The protein resides in the chromosome. It is found in the PML body. Its subcellular location is the telomere. In terms of biological role, component of the MRN complex, which plays a central role in double-strand break (DSB) repair, DNA recombination, maintenance of telomere integrity and meiosis. The MRN complex is involved in the repair of DNA double-strand breaks (DSBs) via homologous recombination (HR), an error-free mechanism which primarily occurs during S and G2 phases. The complex (1) mediates the end resection of damaged DNA, which generates proper single-stranded DNA, a key initial steps in HR, and is (2) required for the recruitment of other repair factors and efficient activation of ATM and ATR upon DNA damage. The MRN complex possesses single-strand endonuclease activity and double-strand-specific 3'-5' exonuclease activity, which are provided by MRE11, to initiate end resection, which is required for single-strand invasion and recombination. Within the MRN complex, nbn acts as a protein-protein adapter, which specifically recognizes and binds phosphorylated proteins, promoting their recruitment to DNA damage sites. Recruits mre11 and rad50 components of the MRN complex to DSBs in response to DNA damage. Promotes the recruitment of PI3/PI4-kinase family members atm, atr, and probably DNA-PKcs to the DNA damage sites, activating their functions. Mediates the recruitment of phosphorylated rbbp8/CtIP to DSBs, leading to cooperation between the MRN complex and rbbp8/CtIP to initiate end resection. The MRN complex and rbbp8/CtIP are also required for chromosome alignment during metaphase. The protein is Nibrin (nbn) of Danio rerio (Zebrafish).